The sequence spans 30 residues: Cycloviolacin-O10 (30 aa).

The cyclopeptide (Gly-Asn) cross-link spans 1–30 (GIPCGESCVYIPCLTSAVGCSCKSKVCYRN). Disulfide bonds link C4-C20, C8-C22, and C13-C27.

Post-translationally, this is a cyclic peptide. Expressed in petals and roots but not in leaves, petioles and runners (at protein level).

Functionally, probably participates in a plant defense mechanism. The chain is Cycloviolacin-O10 from Viola odorata (Sweet violet).